The following is a 356-amino-acid chain: RuBisCO accumulation factor 1 (356 aa).

Residues 7 to 185 (ALTTEVLQRL…RQALEKLLTD (179 aa)) are N-terminal alpha-helix. The interval 209–342 (PYLVPVAGTA…LLLVLRPPQV (134 aa)) is C-terminal beta-sheet.

The protein belongs to the RAF family. As to quaternary structure, homodimer. Forms an RbcL(8)-Raf1(8) complex. Forms complexes of many stoichiometries with RbcL with and without RbcS. RbcX and Raf1 can bind simultaneously to RbcL.

Its subcellular location is the cytoplasm. In terms of biological role, a major RuBisCO chaperone. Acts after GroEL-GroES chaperonin to fold and/or assemble the large subunit of RuBisCO (ccbL, rbcL). Cooperates with RbcX in RbcL folding, plays the major role in assembly of dimers into RbcL(8)-Raf1(8) intermediate complexes. RbcS replaces Raf1, leading to holoenzyme formation. Required for optimal reconstitution of RuBisCO upon expression of rbcL-rbcS subunits in E.coli. Only interacts with the large subunit (cbbL, rbcL). Probably acts in the final stages of RuBisCO assembly, possibly participating in the addition of the small subunit (ccbS, rbcS). This Thermosynechococcus vestitus (strain NIES-2133 / IAM M-273 / BP-1) protein is RuBisCO accumulation factor 1.